The sequence spans 154 residues: Large ribosomal subunit protein uL23 (154 aa).

Belongs to the universal ribosomal protein uL23 family.

Functionally, this protein binds to a specific region on the 26S rRNA. The chain is Large ribosomal subunit protein uL23 (RPL23A) from Fritillaria agrestis (Stinkbells).